A 510-amino-acid polypeptide reads, in one-letter code: Cytochrome P450 94B1 (510 aa).

The helical transmembrane segment at 3-23 threads the bilayer; it reads MLNAIILILFPIIGFVLIFSF. Position 450 (Cys450) interacts with heme.

The protein belongs to the cytochrome P450 family. The cofactor is heme.

The protein resides in the membrane. The catalysed reaction is a jasmonyl-L-amino acid + reduced [NADPH--hemoprotein reductase] + O2 = a 12-hydroxyjasmonyl-L-alpha-amino acid + oxidized [NADPH--hemoprotein reductase] + H2O + H(+). Functionally, hydroxylase involved in the oxidation of the plant hormone jasmonoyl-L-isoleucine (JA-Ile), a bioactive phytohormone of the jasmonate-mediated signaling pathway. Converts JA-Ile to 12-hydroxy-JA-Ile. This chain is Cytochrome P450 94B1, found in Arabidopsis thaliana (Mouse-ear cress).